Consider the following 271-residue polypeptide: Cyclic AMP-dependent transcription factor ATF-1 (271 aa).

The segment at 1–61 (MEDSHKSTTS…QKAHGILARR (61 aa)) is disordered. In terms of domain architecture, KID spans 31–90 (QVSSLSESEESQDSSDSIGSSQKAHGILARRPSYRKILKDLSSEDTRGRKGDGENSGVSA). S63 bears the Phosphoserine; by CaMK1, CDK3, RPS6KA4 and RPS6KA5 mark. S198 bears the Phosphoserine; by HIPK2 mark. Residues K208 and K215 each participate in a glycyl lysine isopeptide (Lys-Gly) (interchain with G-Cter in SUMO2) cross-link. In terms of domain architecture, bZIP spans 213-271 (QLKREIRLMKNREAARECRRKKKEYVKCLENRVAVLENQNKTLIEELKTLKDLYSNKSV). Residues 215–239 (KREIRLMKNREAARECRRKKKEYVK) are basic motif. The tract at residues 241–262 (LENRVAVLENQNKTLIEELKTL) is leucine-zipper.

The protein belongs to the bZIP family. ATF subfamily. In terms of assembly, binds DNA as a dimer. Interacts with HIPK2 and CDK3. Interacts with MOTS-c, a peptide produced by the mitochondrially encoded 12S rRNA MT-RNR1; the interaction occurs in the nucleus following metabolic stress. Post-translationally, phosphorylated at Ser-198 by HIPK2 in response to genotoxic stress. This phosphorylation promotes transcription repression of FTH1 and other antioxidant detoxification genes. The CDK3-mediated phosphorylation at Ser-63 promotes its transactivation and transcriptional activities. Phosphorylated at Ser-63 by RPS6KA4 and RPS6KA5 in response to mitogenic or stress stimuli.

The protein resides in the nucleus. Its function is as follows. This protein binds the cAMP response element (CRE) (consensus: 5'-GTGACGT[AC][AG]-3'), a sequence present in many viral and cellular promoters. Binds to the Tax-responsive element (TRE) of HTLV-I. Mediates PKA-induced stimulation of CRE-reporter genes. Represses the expression of FTH1 and other antioxidant detoxification genes. Triggers cell proliferation and transformation. The sequence is that of Cyclic AMP-dependent transcription factor ATF-1 (ATF1) from Homo sapiens (Human).